The following is a 238-amino-acid chain: U2 small nuclear ribonucleoprotein A' (238 aa).

4 LRR repeats span residues 19–40, 42–63, 64–84, and 89–110; these read KQVT…GITK, TYEV…PRLK, NLKV…DKLP, and HLQS…RILC. Residues 123–161 form the LRRCT domain; that stretch reads NPITDSPNYRYFIVWLIPTLKVLDFSKVKQKELVKAKEL.

This sequence belongs to the U2 small nuclear ribonucleoprotein A family. Associated with the spliceosome.

It localises to the nucleus. In terms of biological role, involved in pre-mRNA splicing. The polypeptide is U2 small nuclear ribonucleoprotein A' (LEA1) (Debaryomyces hansenii (strain ATCC 36239 / CBS 767 / BCRC 21394 / JCM 1990 / NBRC 0083 / IGC 2968) (Yeast)).